The chain runs to 196 residues: Aequorin-1 (196 aa).

A propeptide spanning residues 1–7 (MTSEQYS) is cleaved from the precursor. 4 EF-hand domains span residues 18–53 (KWIGRHKHMFNFLDVNHNGRISLDEMVYKASDIVIN), 54–108 (NLGA…SKNQ), 111–146 (LIRLWGDALFDIIDKDQNGAISLDEWKAYTKSDGII), and 147–182 (QSSEDCEETFRVCDIDESGQLDVDEMTRQHLGFWYT). Asp31, Asn33, Asn35, Arg37, and Glu42 together coordinate Ca(2+). May interact with the chromophore stretches follow at residues 47–57 (ASDIVINNLGA), 62–72 (AKRHKDAVEAF), and 107–117 (NQITLIRLWGD). Residues Asp124, Asp126, Asn128, Glu135, Asp160, Asp162, Ser164, Gln166, and Glu171 each contribute to the Ca(2+) site.

Belongs to the aequorin family. Post-translationally, the reduction of the disulfide bond is necessary to regenerate aequorin from apoaequorin.

In terms of biological role, ca(2+)-dependent bioluminescence photoprotein. Displays an emission peak at 470 nm (blue light). Trace amounts of calcium ion trigger the intramolecular oxidation of the chromophore, coelenterazine into coelenteramide and CO(2) with the concomitant emission of light. The protein is Aequorin-1 of Aequorea victoria (Water jellyfish).